Reading from the N-terminus, the 363-residue chain is MNKNKIIVPLSNNSYEVTIRQGIINSIGKELTQIGINNNRKILIVSNKEISNLFGSKLLNDLKKYNFSAEIFNIKAGESYKNLASLREIYDAAFEFGLDRNALLIALGGGIVGDVTGFAAATWLRGIDYIQIPTTLLSMVDSSVGGKTAVNHPKGKNLIGAFYQPKAVFIDPETLKTLPIREFKAGMAEVIKYGVIKDKELFEYLEIDKNREKILNLDNESLIKIINKSIRTKSYIVSKDEKENGIRAILNYGHSFGHVIENLCGYGEYLHGEAISIGMKIAGDISTEKNLWLKEDSLRQDKLIESYGLPTQTPKIKKHDVITILMGDKKVRDGKMRFILPKGIGEVDIFNDIKESQFLKYFD.

NAD(+) contacts are provided by residues 134–135, Lys147, Lys156, and 174–177; these read TT and TLKT. Zn(2+)-binding residues include Glu189, His254, and His271.

It belongs to the sugar phosphate cyclases superfamily. Dehydroquinate synthase family. It depends on Co(2+) as a cofactor. Requires Zn(2+) as cofactor. NAD(+) serves as cofactor.

The protein resides in the cytoplasm. It catalyses the reaction 7-phospho-2-dehydro-3-deoxy-D-arabino-heptonate = 3-dehydroquinate + phosphate. It participates in metabolic intermediate biosynthesis; chorismate biosynthesis; chorismate from D-erythrose 4-phosphate and phosphoenolpyruvate: step 2/7. In terms of biological role, catalyzes the conversion of 3-deoxy-D-arabino-heptulosonate 7-phosphate (DAHP) to dehydroquinate (DHQ). This Prochlorococcus marinus (strain MIT 9515) protein is 3-dehydroquinate synthase.